Consider the following 380-residue polypeptide: Glycine betaine/carnitine/choline transport ATP-binding protein OpuCA (380 aa).

The ABC transporter domain occupies 2–236 (LKLEQVSKVY…PANEFVEEFI (235 aa)). 35 to 42 (GPSGCGKT) contributes to the ATP binding site. CBS domains are found at residues 255–314 (MNRT…VGDV) and 315–373 (YRSD…WGDE).

This sequence belongs to the ABC transporter superfamily. The complex is composed of two ATP-binding proteins (OpuCA), two transmembrane proteins (OpuCB and OpuCD) and a solute-binding protein (OpuCC).

With respect to regulation, binds cyclic di-AMP (c-di-AMP), which may regulate the transporter activity. Functionally, involved in a high affinity multicomponent binding-protein-dependent transport system for glycine betaine, carnitine and choline; probably responsible for energy coupling to the transport system. The sequence is that of Glycine betaine/carnitine/choline transport ATP-binding protein OpuCA (opuCA) from Bacillus subtilis (strain 168).